The sequence spans 1736 residues: Collagen alpha-2(XI) chain (1736 aa).

The N-terminal stretch at 1-27 (MERCSRCHHLLLLVLLLLWLSAAPAWA) is a signal peptide. The region spanning 57–228 (DVAYRVSRPA…ESCDQKELEC (172 aa)) is the Laminin G-like domain. Residues 215 to 486 (QAAYESCDQK…ILQQARVALR (272 aa)) are nonhelical region. Disordered stretches follow at residues 229-465 (EGGW…DKGP) and 485-1539 (LRGP…SPGG). A compositionally biased stretch (polar residues) spans 258-270 (PQNQEPQAQSTES). Residues 363–376 (ALSAETARSEAAAR) are compositionally biased toward low complexity. Collagen-like domains follow at residues 399–447 (GPPG…GPPG), 487–545 (GPPG…ADGA), and 546–587 (RGMP…PPGE). The segment covering 400–413 (PPGPEGPAGFPGPP) has biased composition (pro residues). The segment at 487–1500 (GPPGPMGYTG…PGHPGPPGEV (1014 aa)) is triple-helical region. The span at 515-533 (DLGPQGPRGPQGLMGPPGK) shows a compositional bias: low complexity. Residues 615-624 (KGPPGIPGPP) show a composition bias toward pro residues. Residues 650-663 (QQGTPGTQGLPGPQ) show a composition bias toward low complexity. The segment covering 765–774 (RGEDGPEGPK) has biased composition (basic and acidic residues). Positions 842–861 (PTGPRGQRGPRGATGKSGAK) are enriched in low complexity. A compositionally biased stretch (gly residues) spans 994–1003 (GTAGGPGLKG). The span at 1029 to 1040 (IGPPGRPGPQGP) shows a compositional bias: pro residues. Collagen-like domains follow at residues 1072–1127 (GPAG…ADGE) and 1128–1172 (PGAR…ETGD). The segment covering 1115–1133 (PVGQPGAAGADGEPGARGP) has biased composition (low complexity). A compositionally biased stretch (pro residues) spans 1176-1187 (MGPPGPPGPRGP). Low complexity predominate over residues 1217 to 1230 (ESGSPGVQGEPGVK). Composition is skewed to basic and acidic residues over residues 1232–1241 (PRGERGEKGE) and 1287–1296 (DGAKGDRGED). 2 stretches are compositionally biased toward low complexity: residues 1341-1364 (PGAV…KPGP) and 1376-1386 (QQGRPGATGQA). The segment covering 1388–1397 (PPGPVGPPGL) has biased composition (pro residues). Residues 1413–1422 (PGLIGLIGPP) are compositionally biased toward low complexity. Residues 1444 to 1499 (GETGIPGASGPIGPGGPPGLPGPAGPKGAKGATGPAGPKGEKGVQGPPGHPGPPGE) enclose the Collagen-like 6 domain. Residues 1457–1467 (PGGPPGLPGPA) are compositionally biased toward pro residues. Residues 1469-1481 (PKGAKGATGPAGP) are compositionally biased toward low complexity. The propeptide at 1501 to 1736 (IQPLPIQMPK…VLLGPVCFMG (236 aa)) is C-terminal propeptide. A Fibrillar collagen NC1 domain is found at 1541-1735 (EEIFGSLDSL…GVLLGPVCFM (195 aa)). Residues Cys-1571 and Cys-1603 are joined by a disulfide bond. Residues Asp-1589, Asn-1591, Gln-1592, Cys-1594, and Asp-1597 each coordinate Ca(2+). Asn-1604 and Asn-1650 each carry an N-linked (GlcNAc...) asparagine glycan. Intrachain disulfides connect Cys-1612-Cys-1733 and Cys-1655-Cys-1689.

This sequence belongs to the fibrillar collagen family. In terms of assembly, trimers composed of three different chains: alpha 1(XI), alpha 2(XI), and alpha 3(XI). Alpha 3(XI) is a post-translational modification of alpha 1(II). Alpha 1(V) can also be found instead of alpha 3(XI)=1(II). Prolines at the third position of the tripeptide repeating unit (G-X-Y) are hydroxylated in some or all of the chains.

The protein localises to the secreted. Its subcellular location is the extracellular space. It localises to the extracellular matrix. Functionally, may play an important role in fibrillogenesis by controlling lateral growth of collagen II fibrils. This is Collagen alpha-2(XI) chain (COL11A2) from Bos taurus (Bovine).